We begin with the raw amino-acid sequence, 38 residues long: Large ribosomal subunit protein bL36A (38 aa).

Belongs to the bacterial ribosomal protein bL36 family.

The chain is Large ribosomal subunit protein bL36A from Pseudomonas aeruginosa (strain UCBPP-PA14).